The following is a 204-amino-acid chain: Double homeobox protein A (204 aa).

The homeobox 1 DNA-binding region spans 15-74 (HRRCRTKFTEEQLKILINTFNQKPYPGYATKQKLALEINTEESRIQIWFQNRRARHGFQK). Disordered regions lie at residues 73 to 101 (QKRP…SREA) and 163 to 204 (EPVA…ARTW). A compositionally biased stretch (polar residues) spans 81 to 90 (LESSQSQGQD). Positions 101-160 (ARRCRTTYSASQLHTLIKAFMKNPYPGIDSREELAKEIGVPESRVQIWFQNRRSRLLLQR) form a DNA-binding region, homeobox 2. The segment covering 184-197 (EDTQNGTNFTSDSH) has biased composition (polar residues).

It belongs to the paired homeobox family. As to expression, expressed in embryonic stem cells.

It localises to the nucleus. Functionally, transcription factor that acts as a repressor. The sequence is that of Double homeobox protein A from Homo sapiens (Human).